The primary structure comprises 51 residues: Sperm protamine P1 (51 aa).

Belongs to the protamine P1 family. As to quaternary structure, cross-linked by interchain disulfide bonds around the DNA-helix. As to expression, testis.

It localises to the nucleus. Its subcellular location is the chromosome. Protamines substitute for histones in the chromatin of sperm during the haploid phase of spermatogenesis. They compact sperm DNA into a highly condensed, stable and inactive complex. The protein is Sperm protamine P1 (PRM1) of Pongo pygmaeus (Bornean orangutan).